The chain runs to 436 residues: Trigger factor (436 aa).

The 86-residue stretch at 163–248 (GDRVVLDFAG…VKEVAEGVLP (86 aa)) folds into the PPIase FKBP-type domain.

Belongs to the FKBP-type PPIase family. Tig subfamily.

It localises to the cytoplasm. It catalyses the reaction [protein]-peptidylproline (omega=180) = [protein]-peptidylproline (omega=0). Involved in protein export. Acts as a chaperone by maintaining the newly synthesized protein in an open conformation. Functions as a peptidyl-prolyl cis-trans isomerase. The chain is Trigger factor from Bordetella bronchiseptica (strain ATCC BAA-588 / NCTC 13252 / RB50) (Alcaligenes bronchisepticus).